We begin with the raw amino-acid sequence, 436 residues long: Enolase (436 aa).

A (2R)-2-phosphoglycerate-binding site is contributed by Gln-167. Glu-209 functions as the Proton donor in the catalytic mechanism. Positions 246, 291, and 318 each coordinate Mg(2+). Residues Lys-343, Arg-372, Ser-373, and Lys-394 each contribute to the (2R)-2-phosphoglycerate site. The active-site Proton acceptor is Lys-343.

The protein belongs to the enolase family. Component of the RNA degradosome, a multiprotein complex involved in RNA processing and mRNA degradation. Mg(2+) is required as a cofactor.

The protein resides in the cytoplasm. Its subcellular location is the secreted. It is found in the cell surface. It catalyses the reaction (2R)-2-phosphoglycerate = phosphoenolpyruvate + H2O. Its pathway is carbohydrate degradation; glycolysis; pyruvate from D-glyceraldehyde 3-phosphate: step 4/5. Catalyzes the reversible conversion of 2-phosphoglycerate (2-PG) into phosphoenolpyruvate (PEP). It is essential for the degradation of carbohydrates via glycolysis. This Haemophilus influenzae (strain PittEE) protein is Enolase.